The sequence spans 1079 residues: Electrogenic sodium bicarbonate cotransporter 1 (1079 aa).

The segment at 1 to 62 (MEDEAVLDRG…EKREKERISE (62 aa)) is required for interaction with AHCYL1. Residues 1–466 (MEDEAVLDRG…FASDFYDALN (466 aa)) are Cytoplasmic-facing. Position 30 is a phosphotyrosine (Tyr30). Basic residues predominate over residues 39–52 (YRRRRRHKRKTGHK). Residues 39–78 (YRRRRRHKRKTGHKEKREKERISENYSDKSDVENADESSS) are disordered. Phosphothreonine; by PKA is present on Thr49. The span at 53 to 70 (EKREKERISENYSDKSDV) shows a compositional bias: basic and acidic residues. A phosphoserine mark is found at Ser61, Ser65, Ser68, Ser223, Ser232, Ser233, and Ser245. The interval 237–265 (MFTSPDNGSPAMTHRNLTSSSLNDISDKP) is disordered. Phosphothreonine occurs at positions 249 and 254. Over residues 251 to 260 (RNLTSSSLND) the composition is skewed to polar residues. Ser256, Ser257, and Ser262 each carry phosphoserine. The chain crosses the membrane as a helical span at residues 467–491 (IQSLSAILFIYLATVTNAITFGGLL). Topologically, residues 492-501 (GDATDNMQGV) are extracellular. A helical membrane pass occupies residues 502-520 (LESFLGTAVSGAIFCLFAG). Residue Gln521 is a topological domain, cytoplasmic. A discontinuously helical transmembrane segment spans residues 522–542 (PLTILSSTGPVLVFERLLFNF). Over 543–550 (SKDHNFDY) the chain is Extracellular. Residues 551-571 (LEFRLWIGLWSAFLCLILVAT) traverse the membrane as a helical segment. Over 572–585 (DASFLVQYFTRFTE) the chain is Cytoplasmic. Residues 586 to 609 (EGFSSLISFIFIYDAFKKMIKLAD) form a helical membrane-spanning segment. The Extracellular portion of the chain corresponds to 610–692 (YYPINSDFKV…GNNCNFVPDV (83 aa)). A helical transmembrane segment spans residues 693–710 (TLMSFILFLGTYTSSMAL). Residues 711-725 (KKFKTSRYFPTTARK) are Cytoplasmic-facing. Residues 726 to 745 (LISDFAIILSILIFCVIDAL) traverse the membrane as a helical segment. At 746–779 (VGVDTPKLIVPSEFKPTSPNRGWFVPPFGGNPWW) the chain is on the extracellular side. Positions 748–779 (VDTPKLIVPSEFKPTSPNRGWFVPPFGGNPWW) are interaction with CA4. The chain crosses the membrane as a helical span at residues 780-807 (VYLAAAIPALLVTILIFMDQQITAVIVN). The Cytoplasmic segment spans residues 808–819 (RKEHKLKKGAGY). Residues 820 to 836 (HLDLFWVAILMVVCSFM) form a helical membrane-spanning segment. Residue Ala837 is a topological domain, extracellular. Residues 838–855 (LPWYVAATVISIAHIDSL) traverse the membrane as a discontinuously helical segment. Over 856–877 (KMETETSAPGEQPKFLGVREQR) the chain is Cytoplasmic. The chain crosses the membrane as a helical span at residues 878–894 (VTGTLVFILTGLSVFMA). Residues 895–901 (PILKFIP) are Extracellular-facing. A helical membrane pass occupies residues 902-918 (MPVLYGVFLYMGVASLN). Residues 919–960 (GVQFMDRLKLLLMPLKHQPDFIYLRHVPLRRVHLFTFLQVLC) lie on the Cytoplasmic side of the membrane. Positions 961 to 986 (LALLWILKSTVAAIIFPVMILALVAV) form an intramembrane region, discontinuously helical. The Cytoplasmic portion of the chain corresponds to 987-1079 (RKGMDYLFSQ…STFLERHTSC (93 aa)). The interval 1002–1004 (LDD) is CA2-binding. Residues 1012–1079 (KKKEDEKKKK…STFLERHTSC (68 aa)) form a disordered region. A Phosphoserine; by PKA modification is found at Ser1026. Position 1029 is a phosphoserine (Ser1029). The segment at 1030–1033 (DNDD) is CA2-binding. Ser1034 and Ser1044 each carry phosphoserine. Residues 1057–1059 (FLS) are required for basolateral targeting. Positions 1062-1079 (KPSDREKSSTFLERHTSC) are enriched in basic and acidic residues. Residue Ser1069 is modified to Phosphoserine.

Belongs to the anion exchanger (TC 2.A.31) family. Homodimer. Interacts with CA2/carbonic anhydrase 2 and CA4/carbonic anhydrase 4 which may regulate transporter activity. Isoform 1 but not isoform 2 interacts with AHCYL1 (via PEST domain when phosphorylated); the interaction increases SLC4A4 isoform 1 activity. Interacts with AHCYL2. Post-translationally, phosphorylation of Ser-1026 by PKA increases the binding of CA2 and changes the Na(+):HCO3(-) stoichiometry of the transporter from 3:1 to 2:1. Phosphorylated in presence of STK39 and dephosphorylated in presence of PP1 phosphatase; phosphorylation seems to inhibit SLC4A4 activity. N-glycosylated. May not be necessary for the transporter basic functions. In terms of tissue distribution, expressed in colonic mucosa, kidney cortex and to gastric mucosa.

The protein resides in the basolateral cell membrane. It is found in the cell membrane. The catalysed reaction is 2 hydrogencarbonate(out) + Na(+)(out) = 2 hydrogencarbonate(in) + Na(+)(in). The enzyme catalyses 3 hydrogencarbonate(out) + Na(+)(out) = 3 hydrogencarbonate(in) + Na(+)(in). Its function is as follows. Electrogenic sodium/bicarbonate cotransporter with a Na(+):HCO3(-) stoichiometry varying from 1:2 to 1:3. May regulate bicarbonate influx/efflux at the basolateral membrane of cells and regulate intracellular pH. This chain is Electrogenic sodium bicarbonate cotransporter 1 (SLC4A4), found in Oryctolagus cuniculus (Rabbit).